The primary structure comprises 660 residues: DNA mismatch repair protein MutL (660 aa).

Over residues 341–355 (SFQSDGAPPTQQLSS) the composition is skewed to polar residues. Disordered regions lie at residues 341–362 (SFQSDGAPPTQQLSSDVREKAE) and 378–398 (ALSPTKQELPKSPERSERVER). Residues 385 to 398 (ELPKSPERSERVER) are compositionally biased toward basic and acidic residues.

Belongs to the DNA mismatch repair MutL/HexB family.

This protein is involved in the repair of mismatches in DNA. It is required for dam-dependent methyl-directed DNA mismatch repair. May act as a 'molecular matchmaker', a protein that promotes the formation of a stable complex between two or more DNA-binding proteins in an ATP-dependent manner without itself being part of a final effector complex. This is DNA mismatch repair protein MutL from Heliobacterium modesticaldum (strain ATCC 51547 / Ice1).